Here is a 1380-residue protein sequence, read N- to C-terminus: DNA-directed RNA polymerase subunit beta (1380 aa).

It belongs to the RNA polymerase beta chain family. The RNAP catalytic core consists of 2 alpha, 1 beta, 1 beta' and 1 omega subunit. When a sigma factor is associated with the core the holoenzyme is formed, which can initiate transcription.

The catalysed reaction is RNA(n) + a ribonucleoside 5'-triphosphate = RNA(n+1) + diphosphate. In terms of biological role, DNA-dependent RNA polymerase catalyzes the transcription of DNA into RNA using the four ribonucleoside triphosphates as substrates. The sequence is that of DNA-directed RNA polymerase subunit beta from Rhizobium meliloti (strain 1021) (Ensifer meliloti).